The sequence spans 395 residues: Phosphoglycerate kinase (395 aa).

Substrate-binding positions include 21–23, Arg36, 59–62, Arg120, and Arg153; these read DFN and HLGR. Residues Lys203, Glu325, and 351-354 each bind ATP; that span reads GGDS.

It belongs to the phosphoglycerate kinase family. Monomer.

It is found in the cytoplasm. It carries out the reaction (2R)-3-phosphoglycerate + ATP = (2R)-3-phospho-glyceroyl phosphate + ADP. Its pathway is carbohydrate degradation; glycolysis; pyruvate from D-glyceraldehyde 3-phosphate: step 2/5. The sequence is that of Phosphoglycerate kinase from Roseiflexus sp. (strain RS-1).